A 109-amino-acid chain; its full sequence is U4-lycotoxin-Ls1c (109 aa).

The first 22 residues, 1–22 (MKVLVLFSVLFLTLFSYSSTEA), serve as a signal peptide directing secretion. A propeptide spanning residues 23–44 (IDEFDSDAEDDMLSLMANEQVR) is cleaved from the precursor. The tract at residues 45 to 88 (AKACTPRLHDCSHDRHSCCRGELFKDVCYCFYPEGEDITEVCSC) is knottin domain. Intrachain disulfides connect C48–C63, C55–C72, C62–C88, and C74–C86. The linear cationic cytotoxin domain stretch occupies residues 89 to 108 (QQPKSHKYIEKVVDKAKTVV).

The protein belongs to the neurotoxin 19 (CSTX) family. 05 (U4-Lctx) subfamily. Expressed by the venom gland.

It is found in the secreted. In terms of biological role, enhances the high-affinity desensitization of human P2RX3 purinoceptors. This is U4-lycotoxin-Ls1c from Lycosa singoriensis (Wolf spider).